The sequence spans 315 residues: Universal stress protein E (315 aa).

The protein belongs to the universal stress protein A family.

The protein localises to the cytoplasm. In terms of biological role, required for resistance to DNA-damaging agents. This Salmonella typhi protein is Universal stress protein E (uspE).